The chain runs to 1076 residues: MGILSITDQPPLVQAIFSRDVEEVRSLLSQKENINVLDQERRTPLHAAAYVGDVPILQLLLMSGANVNAKDTLWLTPLHRAAASRNEKVLGLLLAHSADVNARDKLWQTPLHVAAANRATKCAEALAPLLSSLNVADRSGRSALHHAVHSGHLETVNLLLNKGASLNVCDKKERQPLHWAAFLGHLEVLKLLVARGADLGCKDRKGYGLLHTAAASGQIEVVKYLLRMGAEIDEPNAFGNTALHIACYLGQDAVAIELVNAGANVNQPNDKGFTPLHVAAVSTNGALCLELLVNNGADVNYQSKEGKSPLHMAAIHGRFTRSQILIQNGSEIDCADKFGNTPLHVAARYGHELLISTLMTNGADTARRGIHDMFPLHLAVLFGFSDCCRKLLSSGQLYSIVSSLSNEHVLSAGFDINTPDNLGRTCLHAAASGGNVECLNLLLSSGADLRRRDKFGRTPLHYAAANGSYQCAVTLVTAGAGVNEADCKGCSPLHYAAASDTYRRAEPHTPSSHDAEEDEPLKESRRKEAFFCLEFLLDNGADPSLRDRQGYTAVHYAAAYGNRQNLELLLEMSFNCLEDVESTIPVSPLHLAAYNGHCEALKTLAETLVNLDVRDHKGRTALFLATERGSTECVEVLTAHGASALIKERKRKWTPLHAAAASGHTDSLHLLIDSGERADITDVMDAYGQTPLMLAIMNGHVDCVHLLLEKGSTADAADLRGRTALHRGAVTGCEDCLAALLDHDAFVLCRDFKGRTPIHLASACGHTAVLRTLLQAALSTDPLDAGVDYSGYSPMHWASYTGHEDCLELLLEHSPFSYLEGNPFTPLHCAVINNQDSTTEMLLGALGAKIVNSRDAKGRTPLHAAAFADNVSGLRMLLQHQAEVNATDHTGRTALMTAAENGQTAAVEFLLYRGKADLTVLDENKNTALHLACSKGHEKCALMILAETQDLGLINATNSALQMPLHIAARNGLASVVQALLSHGATVLAVDEEGHTPALACAPNKDVADCLALILSTMKPFPPKDAVSPFSFSLLKNCSIAAAKTVGGCGALPHGASCPYSQERPGAIGLDGCYSE.

28 ANK repeats span residues 7-36 (TDQP…NINV), 40-69 (ERRT…NVNA), 73-102 (LWLT…DVNA), 106-135 (LWQT…SLNV), 139-168 (SGRS…SLNV), 172-201 (KERQ…DLGC), 205-234 (KGYG…EIDE), 238-267 (FGNT…NVNQ), 271-301 (KGFT…DVNY), 305-334 (EGKS…EIDC), 338-367 (FGNT…DTAR), 371-400 (HDMF…LYSI), 422-451 (LGRT…DLRR), 455-484 (FGRT…GVNE), 488-545 (KGCS…DPSL), 549-579 (QGYT…CLED), 584-613 (IPVS…NLDV), 617-646 (KGRT…SALI), 651-680 (RKWT…RADI), 687-716 (YGQT…TADA), 720-749 (RGRT…FVLC), 753-782 (KGRT…STDP), 790-819 (SGYS…FSYL), 822-852 (NPFT…KIVN), 857-886 (KGRT…EVNA), 890-920 (TGRT…DLTV), 924-953 (NKNT…DLGL), and 960-989 (ALQM…TVLA). Positions 502 to 514 (YRRAEPHTPSSHD) are enriched in basic and acidic residues. Residues 502–522 (YRRAEPHTPSSHDAEEDEPLK) form a disordered region. 2 positions are modified to phosphoserine: Ser1028 and Ser1075.

Protein phosphatase 6 (PP6) holoenzyme is proposed to be a heterotrimeric complex formed by the catalytic subunit, a SAPS domain-containing subunit (PP6R) and an ankyrin repeat-domain containing regulatory subunit (ARS). Interacts with PPP6R1.

Functionally, putative regulatory subunit of protein phosphatase 6 (PP6) that may be involved in the recognition of phosphoprotein substrates. The protein is Serine/threonine-protein phosphatase 6 regulatory ankyrin repeat subunit C (ANKRD52) of Homo sapiens (Human).